The primary structure comprises 372 residues: Cell division protein FtsZ 1 (372 aa).

Residues 51 to 55 (GAGCN), 138 to 140 (GTG), Glu169, Arg173, and Asp216 each bind GTP. A disordered region spans residues 352–372 (EETPAPSEEETTPVKIDIPEL).

Belongs to the FtsZ family. Homodimer. Polymerizes to form a dynamic ring structure in a strictly GTP-dependent manner. Interacts directly with several other division proteins.

The protein localises to the cytoplasm. Its function is as follows. Essential cell division protein that forms a contractile ring structure (Z ring) at the future cell division site. The regulation of the ring assembly controls the timing and the location of cell division. One of the functions of the FtsZ ring is to recruit other cell division proteins to the septum to produce a new cell wall between the dividing cells. Binds GTP and shows GTPase activity. This Pyrococcus horikoshii (strain ATCC 700860 / DSM 12428 / JCM 9974 / NBRC 100139 / OT-3) protein is Cell division protein FtsZ 1.